The sequence spans 50 residues: uncharacterized protein (50 aa).

This is an uncharacterized protein from His1 virus (isolate Australia/Victoria) (His1V).